The following is a 129-amino-acid chain: UPF0344 protein SAB0838 (129 aa).

4 helical membrane passes run 1-21, 36-56, 67-87, and 99-119; these read MLHLHILSWVLAIILFIATYL, LHMVLRLFMLLMLISGFWILI, MLLTLKMLCGVAVVGLMEVSI, and MFWITIALIIITMVLGVILPL.

It belongs to the UPF0344 family.

The protein localises to the cell membrane. This is UPF0344 protein SAB0838 from Staphylococcus aureus (strain bovine RF122 / ET3-1).